The chain runs to 118 residues: Large ribosomal subunit protein bL19 (118 aa).

This sequence belongs to the bacterial ribosomal protein bL19 family.

Functionally, this protein is located at the 30S-50S ribosomal subunit interface and may play a role in the structure and function of the aminoacyl-tRNA binding site. The sequence is that of Large ribosomal subunit protein bL19 from Salinispora arenicola (strain CNS-205).